The chain runs to 547 residues: Vacuolar fusion protein MON1 homolog B (547 aa).

M1 carries the N-acetylmethionine modification. The disordered stretch occupies residues 1 to 106 (MEAGGDTAAP…GGDPSDEEWR (106 aa)). Positions 57–66 (PPSPSPPPQS) are enriched in pro residues. S59 and S61 each carry phosphoserine.

It belongs to the MON1/SAND family. Interacts with CCNT2; down-regulates CCNT2-mediated activation of viral promoters during herpes simplex virus 1/HHV-1 infection. Found in a complex with RMC1, CCZ1 MON1A and MON1B.

The sequence is that of Vacuolar fusion protein MON1 homolog B (MON1B) from Macaca fascicularis (Crab-eating macaque).